A 246-amino-acid polypeptide reads, in one-letter code: Mitochondrial inner membrane protease ATP23 homolog (246 aa).

H125 is a binding site for a divalent metal cation. Residue E126 is part of the active site. Residue H129 coordinates a divalent metal cation.

This sequence belongs to the peptidase M76 family. As to quaternary structure, interacts with XRCC6.

The sequence is that of Mitochondrial inner membrane protease ATP23 homolog from Homo sapiens (Human).